The chain runs to 438 residues: Polycomb protein eed-B (438 aa).

Positions 1-70 (MSEASGRAAG…GRKGWGKGKW (70 aa)) are disordered. Over residues 40–57 (SIESGTNTERPDTPTNAA) the composition is skewed to polar residues. 7 WD repeats span residues 88–131 (DHNQ…DIRL), 139–182 (DADE…CIKH), 185–225 (GHGN…LVAI), 231–270 (GHRD…MKTA), 301–338 (IHRN…DDIE), 356–396 (SQCD…PHKA), and 405–438 (KCAS…DRLR).

It belongs to the WD repeat ESC family. In terms of assembly, component of the prc2/eed-ezh2 complex. Can interact with ezh2, hdac1 and taf9. Interacts with yy1.

Its subcellular location is the nucleus. Functionally, polycomb group (PcG) protein. Component of the prc2/eed-ezh2 complex, which methylates 'Lys-9' and 'Lys-27' of histone H3, leading to transcriptional repression of the affected target gene. May play a role in neural induction. The polypeptide is Polycomb protein eed-B (eed-b) (Xenopus laevis (African clawed frog)).